We begin with the raw amino-acid sequence, 153 residues long: Large ribosomal subunit protein uL30 (153 aa).

This sequence belongs to the universal ribosomal protein uL30 family. In terms of assembly, part of the 50S ribosomal subunit.

This Methanoculleus marisnigri (strain ATCC 35101 / DSM 1498 / JR1) protein is Large ribosomal subunit protein uL30.